We begin with the raw amino-acid sequence, 514 residues long: Beta-secretase 2 (514 aa).

The first 19 residues, 1-19 (MGALLRALLLLVLAQWLLS), serve as a signal peptide directing secretion. A propeptide spanning residues 20 to 62 (AVPALAPAPFTLPLQVAGATNHRASAVPGLGTPELPRADGLAL) is cleaved from the precursor. At 20–469 (AVPALAPAPF…NEPILWIVSY (450 aa)) the chain is on the extracellular side. In terms of domain architecture, Peptidase A1 spans 88 to 425 (YYLEMLIGTP…DRAQRRVGFA (338 aa)). The active site involves Asp-106. N-linked (GlcNAc...) asparagine glycosylation occurs at Asn-166. 3 cysteine pairs are disulfide-bonded: Cys-229–Cys-429, Cys-288–Cys-453, and Cys-340–Cys-389. Asp-299 is a catalytic residue. An N-linked (GlcNAc...) asparagine glycan is attached at Asn-362. Residues 470–490 (ALMSVCGAILLVLILLLLLPL) traverse the membrane as a helical segment. The Cytoplasmic portion of the chain corresponds to 491–514 (HCRHAPRDPEVVNDESSLVRHRWK).

It belongs to the peptidase A1 family. In terms of assembly, monomer. Interacts with RTN3 and RTN4. In terms of processing, undergoes autoproteolytic cleavage. Post-translationally, glycosylated. High expression in pancreatic islets. Expressed at much lower levels in the pituitary, colon, and ovaries and is nearly absent from all the other tissues.

It is found in the cell membrane. Its subcellular location is the golgi apparatus. It localises to the endoplasmic reticulum. The protein localises to the endosome. The protein resides in the melanosome. The enzyme catalyses Broad endopeptidase specificity. Cleaves Glu-Val-Asn-Leu-|-Asp-Ala-Glu-Phe in the Swedish variant of Alzheimer's amyloid precursor protein.. Functionally, responsible for the proteolytic processing of the amyloid precursor protein (APP). Cleaves APP, between residues 690 and 691, leading to the generation and extracellular release of beta-cleaved soluble APP, and a corresponding cell-associated C-terminal fragment which is later released by gamma-secretase. It has also been shown that it can cleave APP between residues 671 and 672. Involved in the proteolytic shedding of PMEL at early stages of melanosome biogenesis. Cleaves PMEL within the M-beta fragment to release the amyloidogenic PMEL luminal fragment containing M-alpha and a small portion of M-beta N-terminus. This is a prerequisite step for subsequent processing and assembly of PMEL fibrils into amyloid sheets. Responsible also for the proteolytic processing of CLTRN in pancreatic beta cells. This chain is Beta-secretase 2 (Bace2), found in Mus musculus (Mouse).